Here is a 767-residue protein sequence, read N- to C-terminus: MGEICPRREDFDIDYILKNASLLEKVSLLAGYDFWHTAPLPRFNVPSVRVSDGPNGVRGTKFFDGVRAACLPCGTGLAATWDQSLLYDAGVLIGQECLAKGAHCWLVPTVCIQRSPLGGRGFESFAEDPYATGKLAAAYIRGAQSTGVISTIKHFAANDQEHERISVNAVMSERALREVHLLPFQIAIADSAPGAVMTCYNKVNGQHLSESKEMLDGLLRREWGWKGLIMSDWFGTYSTAEALNAGLGLEMPGTTRLRGPLLELAISSRKVSRATLDERARTVLEFVQRARKAEVSAVESTRDFPEDRRLNRKLAADSIVLLKNESGLLPLNPQTLTSVALIGPNMKTAAFCGGGSASLQPYYSTSPYQGITSQLPPGVEVLYETGATSYAFIPELEASEVRTPEGQPGLRMRFYRDPPSVQERRVLMGFSNPELDRLFYADIEAELIAPATGPFQFGLAVYGSASLFLNDQLIIDNTTVQRGGTFFFGKGTLEETATVDLVQGQSYQIKVQFASGPSSKLVKPGVVNFGGGAGRLGMVQVVDPERAIARAVEAAKRADITILGVGLTRDHESEGFDRSHMDLPPAVASLVTAVLDVAPDAILLTQSGTPFSMLPWADLVKTHLHAWFGGNELGNGIADVLFGVVNPSGKLPLSFPRRIEDTPTYLNFGSERGQVTYGEGIYVGYKLLRKSPTSCALSIRARFVVHLLCVLRFDGRHRVRYTECSKLGRRGRSGSSPAVYRGRSNNVVNRTSHQGAQRISKGGFAAR.

N-linked (GlcNAc...) asparagine glycosylation occurs at N19. The active site involves D232. Residues N324, N477, and N749 are each glycosylated (N-linked (GlcNAc...) asparagine). The 148-residue stretch at 405 to 552 (EGQPGLRMRF…DPERAIARAV (148 aa)) folds into the PA14 domain. A disordered region spans residues 727-767 (LGRRGRSGSSPAVYRGRSNNVVNRTSHQGAQRISKGGFAAR). The segment covering 743-757 (RSNNVVNRTSHQGAQ) has biased composition (polar residues).

The protein belongs to the glycosyl hydrolase 3 family.

The protein localises to the secreted. It catalyses the reaction Hydrolysis of terminal, non-reducing beta-D-glucosyl residues with release of beta-D-glucose.. It participates in glycan metabolism; cellulose degradation. Its function is as follows. Beta-glucosidases are one of a number of cellulolytic enzymes involved in the degradation of cellulosic biomass. Catalyzes the last step releasing glucose from the inhibitory cellobiose. The polypeptide is Probable beta-glucosidase K (bglK) (Aspergillus fumigatus (strain ATCC MYA-4609 / CBS 101355 / FGSC A1100 / Af293) (Neosartorya fumigata)).